The primary structure comprises 158 residues: ATP synthase subunit b' (158 aa).

The helical transmembrane segment at 24–44 threads the bilayer; sequence ATLPLMAVQILVLVFLLNAVF.

This sequence belongs to the ATPase B chain family. As to quaternary structure, F-type ATPases have 2 components, F(1) - the catalytic core - and F(0) - the membrane proton channel. F(1) has five subunits: alpha(3), beta(3), gamma(1), delta(1), epsilon(1). F(0) has four main subunits: a(1), b(1), b'(1) and c(10-14). The alpha and beta chains form an alternating ring which encloses part of the gamma chain. F(1) is attached to F(0) by a central stalk formed by the gamma and epsilon chains, while a peripheral stalk is formed by the delta, b and b' chains.

It localises to the cellular thylakoid membrane. Its function is as follows. F(1)F(0) ATP synthase produces ATP from ADP in the presence of a proton or sodium gradient. F-type ATPases consist of two structural domains, F(1) containing the extramembraneous catalytic core and F(0) containing the membrane proton channel, linked together by a central stalk and a peripheral stalk. During catalysis, ATP synthesis in the catalytic domain of F(1) is coupled via a rotary mechanism of the central stalk subunits to proton translocation. Functionally, component of the F(0) channel, it forms part of the peripheral stalk, linking F(1) to F(0). The b'-subunit is a diverged and duplicated form of b found in plants and photosynthetic bacteria. The polypeptide is ATP synthase subunit b' (Synechococcus elongatus (strain ATCC 33912 / PCC 7942 / FACHB-805) (Anacystis nidulans R2)).